Consider the following 577-residue polypeptide: Sulfite reductase [NADPH] hemoprotein beta-component (577 aa).

Residues Cys441, Cys447, Cys486, and Cys490 each coordinate [4Fe-4S] cluster. A siroheme-binding site is contributed by Cys490.

The protein belongs to the nitrite and sulfite reductase 4Fe-4S domain family. As to quaternary structure, alpha(8)-beta(8). The alpha component is a flavoprotein, the beta component is a hemoprotein. It depends on siroheme as a cofactor. [4Fe-4S] cluster serves as cofactor.

It carries out the reaction hydrogen sulfide + 3 NADP(+) + 3 H2O = sulfite + 3 NADPH + 4 H(+). It participates in sulfur metabolism; hydrogen sulfide biosynthesis; hydrogen sulfide from sulfite (NADPH route): step 1/1. Its function is as follows. Component of the sulfite reductase complex that catalyzes the 6-electron reduction of sulfite to sulfide. This is one of several activities required for the biosynthesis of L-cysteine from sulfate. This chain is Sulfite reductase [NADPH] hemoprotein beta-component, found in Pectobacterium atrosepticum (strain SCRI 1043 / ATCC BAA-672) (Erwinia carotovora subsp. atroseptica).